Consider the following 273-residue polypeptide: Dermonecrotic toxin LhSicTox-alphaIA2bvi (273 aa).

Histidine 5 is an active-site residue. Residues glutamate 25 and aspartate 27 each contribute to the Mg(2+) site. Histidine 41 (nucleophile) is an active-site residue. Intrachain disulfides connect cysteine 45/cysteine 51 and cysteine 47/cysteine 190. Aspartate 85 lines the Mg(2+) pocket.

Belongs to the arthropod phospholipase D family. Class II subfamily. Mg(2+) serves as cofactor. As to expression, expressed by the venom gland.

Its subcellular location is the secreted. It catalyses the reaction an N-(acyl)-sphingosylphosphocholine = an N-(acyl)-sphingosyl-1,3-cyclic phosphate + choline. The enzyme catalyses an N-(acyl)-sphingosylphosphoethanolamine = an N-(acyl)-sphingosyl-1,3-cyclic phosphate + ethanolamine. The catalysed reaction is a 1-acyl-sn-glycero-3-phosphocholine = a 1-acyl-sn-glycero-2,3-cyclic phosphate + choline. It carries out the reaction a 1-acyl-sn-glycero-3-phosphoethanolamine = a 1-acyl-sn-glycero-2,3-cyclic phosphate + ethanolamine. Its function is as follows. Dermonecrotic toxins cleave the phosphodiester linkage between the phosphate and headgroup of certain phospholipids (sphingolipid and lysolipid substrates), forming an alcohol (often choline) and a cyclic phosphate. This toxin acts on sphingomyelin (SM). It may also act on ceramide phosphoethanolamine (CPE), lysophosphatidylcholine (LPC) and lysophosphatidylethanolamine (LPE), but not on lysophosphatidylserine (LPS), and lysophosphatidylglycerol (LPG). It acts by transphosphatidylation, releasing exclusively cyclic phosphate products as second products. Induces dermonecrosis, hemolysis, increased vascular permeability, edema, inflammatory response, and platelet aggregation. This Loxosceles hirsuta (Recluse spider) protein is Dermonecrotic toxin LhSicTox-alphaIA2bvi.